Consider the following 282-residue polypeptide: Succinate dehydrogenase [ubiquinone] iron-sulfur subunit, mitochondrial (282 aa).

Residues 1–21 (MLRGSTSVCRSLELVTQAARY) constitute a mitochondrion transit peptide. Residues 39–129 (EIYRFNPEEP…TTKIYPLPHM (91 aa)) enclose the 2Fe-2S ferredoxin-type domain. [2Fe-2S] cluster is bound by residues Cys89, Cys94, Cys97, and Cys109. One can recognise a 4Fe-4S ferredoxin-type domain in the interval 172 to 202 (EQEKLDGLYECILCACCSASCPSYWWNADKY). [4Fe-4S] cluster-binding residues include Cys182, Cys185, and Cys188. [3Fe-4S] cluster is bound at residue Cys192. Trp197 contacts a rhodoquinol. Position 197 (Trp197) interacts with a ubiquinone. Residues Cys239 and Cys245 each contribute to the [3Fe-4S] cluster site. Cys249 contacts [4Fe-4S] cluster.

The protein belongs to the succinate dehydrogenase/fumarate reductase iron-sulfur protein family. As to quaternary structure, component of the mitochondrial electron transport chain complex II composed of four subunits: a flavoprotein (Fp), an iron-sulfur protein (Ip), and a large cytochrome b (CybL) subunit and a small cytochrome b (CybS) subunit. There are 2 developmental stage-specific forms of complex II which have the Ip and CybL subunits in common. Complex II from the free-living larvae (aerobic environment) acts as a succinate dehydrogenase and is composed of the common subunit Ip and CybL and the stage specific subunits FpL and CybSL. Complex II from parasitic larvae and adults (anaerobic environment) acts as a fumarate reductase and is composed of the common subunit Ip and CybL and the stage specific subunits FpA and CybSA. It depends on [2Fe-2S] cluster as a cofactor. [3Fe-4S] cluster is required as a cofactor. Requires [4Fe-4S] cluster as cofactor. As to expression, expressed in adult muscles (at protein level).

The protein localises to the mitochondrion inner membrane. It catalyses the reaction a ubiquinone + succinate = a ubiquinol + fumarate. It carries out the reaction a rhodoquinone + succinate = a rhodoquinol + fumarate. It participates in carbohydrate metabolism; tricarboxylic acid cycle; fumarate from succinate (eukaryal route): step 1/1. Its activity is regulated as follows. Inhibited by the fungicide flutolanil. In terms of biological role, iron-sulfur protein (Ip) subunit of the mitochondrial electron transport chain complex II which, together with the flavoprotein (Fp) subunit forms the catalytic core of the complex. During the free-living egg-larvae stages, which occur in an aerobic environment, complex II acts as a succinate dehydrogenase by transferring electrons from succinate to ubiquinone. During the parasitic larvae and adult stages, which occur in an anaerobic environment, complex II acts as a fumarate reductase by transferring electrons from rhodoquinol to fumarate. This is Succinate dehydrogenase [ubiquinone] iron-sulfur subunit, mitochondrial from Ascaris suum (Pig roundworm).